The chain runs to 302 residues: Plant UBX domain-containing protein 3 (302 aa).

Disordered stretches follow at residues 1–64 (MSSK…PKHD) and 79–98 (VEGP…TGRL). The 65-residue stretch at 113-177 (PVIHNIIFWS…NLMRRDEKCP (65 aa)) folds into the SEP domain. Residues 224–301 (ETLPSTSIQL…GLASSVVIQK (78 aa)) enclose the UBX domain.

As to quaternary structure, interacts with CDC48A.

This chain is Plant UBX domain-containing protein 3, found in Arabidopsis thaliana (Mouse-ear cress).